The primary structure comprises 120 residues: Large ribosomal subunit protein bL19 (120 aa).

This sequence belongs to the bacterial ribosomal protein bL19 family.

In terms of biological role, this protein is located at the 30S-50S ribosomal subunit interface and may play a role in the structure and function of the aminoacyl-tRNA binding site. The protein is Large ribosomal subunit protein bL19 of Cyanothece sp. (strain PCC 7425 / ATCC 29141).